A 326-amino-acid polypeptide reads, in one-letter code: DNA-directed RNA polymerase subunit alpha (326 aa).

Positions 1–231 (MQTNLLKPKI…DQLVVFAALE (231 aa)) are alpha N-terminal domain (alpha-NTD). Positions 247–326 (VDPMLMRPVD…ESWPPANLEK (80 aa)) are alpha C-terminal domain (alpha-CTD).

Belongs to the RNA polymerase alpha chain family. Homodimer. The RNAP catalytic core consists of 2 alpha, 1 beta, 1 beta' and 1 omega subunit. When a sigma factor is associated with the core the holoenzyme is formed, which can initiate transcription.

It catalyses the reaction RNA(n) + a ribonucleoside 5'-triphosphate = RNA(n+1) + diphosphate. Functionally, DNA-dependent RNA polymerase catalyzes the transcription of DNA into RNA using the four ribonucleoside triphosphates as substrates. The protein is DNA-directed RNA polymerase subunit alpha of Polynucleobacter asymbioticus (strain DSM 18221 / CIP 109841 / QLW-P1DMWA-1) (Polynucleobacter necessarius subsp. asymbioticus).